Reading from the N-terminus, the 351-residue chain is 7,8-didemethyl-8-hydroxy-5-deazariboflavin synthase (351 aa).

In terms of domain architecture, Radical SAM core spans 35-275 (ITYSKNAFIP…EDISIQVPPN (241 aa)). Residues Cys49, Cys53, and Cys56 each contribute to the [4Fe-4S] cluster site.

Belongs to the radical SAM superfamily. CofG family. In terms of assembly, consists of two subunits, CofG and CofH. [4Fe-4S] cluster serves as cofactor.

It catalyses the reaction 5-amino-5-(4-hydroxybenzyl)-6-(D-ribitylimino)-5,6-dihydrouracil + S-adenosyl-L-methionine = 7,8-didemethyl-8-hydroxy-5-deazariboflavin + 5'-deoxyadenosine + L-methionine + NH4(+) + H(+). It functions in the pathway cofactor biosynthesis; coenzyme F0 biosynthesis. Its function is as follows. Catalyzes the radical-mediated synthesis of 7,8-didemethyl-8-hydroxy-5-deazariboflavin from 5-amino-5-(4-hydroxybenzyl)-6-(D-ribitylimino)-5,6-dihydrouracil. This is 7,8-didemethyl-8-hydroxy-5-deazariboflavin synthase from Methanococcus vannielii (strain ATCC 35089 / DSM 1224 / JCM 13029 / OCM 148 / SB).